The sequence spans 458 residues: KAT8 regulatory NSL complex subunit 2 (458 aa).

Residue lysine 78 forms a Glycyl lysine isopeptide (Lys-Gly) (interchain with G-Cter in SUMO2) linkage. The interval glutamate 126 to lysine 182 is disordered. A Phosphothreonine modification is found at threonine 131. Residues serine 135–aspartate 144 are compositionally biased toward basic and acidic residues. Residues serine 147, serine 149, serine 168, serine 172, and serine 175 each carry the phosphoserine modification. Over residues aspartate 167–glutamate 178 the composition is skewed to acidic residues. The tract at residues aspartate 308–phenylalanine 364 is required for interaction with other NSL complex members. Residues glutamine 419–serine 458 form a disordered region.

As to quaternary structure, component of the NSL complex at least composed of KAT8/MOF, KANSL1, KANSL2, KANSL3, MCRS1, PHF20, OGT1/OGT, WDR5 and HCFC1.

It is found in the nucleus. The protein resides in the mitochondrion. Its function is as follows. Non-catalytic component of the NSL histone acetyltransferase complex, a multiprotein complex that mediates histone H4 acetylation at 'Lys-5'- and 'Lys-8' (H4K5ac and H4K8ac) at transcription start sites and promotes transcription initiation. Required for NSL complex stability and for transcription of intraciliary transport genes in both ciliated and non-ciliated cells by regulating histone H4 acetylation at 'Lys-5'- and 'Lys-12' (H4K5ac and H4K12ac). This is necessary for cilium assembly in ciliated cells and for organization of the microtubule cytoskeleton in non-ciliated cells. Required within the NSL complex to maintain nuclear architecture stability by promoting KAT8-mediated acetylation of lamin LMNA. This is KAT8 regulatory NSL complex subunit 2 (KANSL2) from Bos taurus (Bovine).